The chain runs to 352 residues: Phenylalanine--tRNA ligase alpha subunit (352 aa).

Glu-258 is a Mg(2+) binding site.

Belongs to the class-II aminoacyl-tRNA synthetase family. Phe-tRNA synthetase alpha subunit type 1 subfamily. In terms of assembly, tetramer of two alpha and two beta subunits. Mg(2+) is required as a cofactor.

It is found in the cytoplasm. It carries out the reaction tRNA(Phe) + L-phenylalanine + ATP = L-phenylalanyl-tRNA(Phe) + AMP + diphosphate + H(+). The protein is Phenylalanine--tRNA ligase alpha subunit of Staphylococcus saprophyticus subsp. saprophyticus (strain ATCC 15305 / DSM 20229 / NCIMB 8711 / NCTC 7292 / S-41).